A 72-amino-acid polypeptide reads, in one-letter code: Putative transmembrane protein DDB_G0272126 (72 aa).

2 helical membrane passes run 6–26 (KIIK…NTII) and 38–58 (IILV…IFYG).

Its subcellular location is the membrane. This is Putative transmembrane protein DDB_G0272126 from Dictyostelium discoideum (Social amoeba).